The sequence spans 516 residues: UvrABC system protein C (516 aa).

One can recognise a GIY-YIG domain in the interval 9 to 87 (HLPGCYLFKD…IKKHWPRYNI (79 aa)). A UVR domain is found at 191–226 (GELIESMEKEMKKMAAKQMFEQAMALRDEISALEYL).

Belongs to the UvrC family. In terms of assembly, interacts with UvrB in an incision complex.

It localises to the cytoplasm. Functionally, the UvrABC repair system catalyzes the recognition and processing of DNA lesions. UvrC both incises the 5' and 3' sides of the lesion. The N-terminal half is responsible for the 3' incision and the C-terminal half is responsible for the 5' incision. The chain is UvrABC system protein C from Methanosarcina acetivorans (strain ATCC 35395 / DSM 2834 / JCM 12185 / C2A).